A 475-amino-acid polypeptide reads, in one-letter code: Aspartyl/glutamyl-tRNA(Asn/Gln) amidotransferase subunit B (475 aa).

This sequence belongs to the GatB/GatE family. GatB subfamily. In terms of assembly, heterotrimer of A, B and C subunits.

It catalyses the reaction L-glutamyl-tRNA(Gln) + L-glutamine + ATP + H2O = L-glutaminyl-tRNA(Gln) + L-glutamate + ADP + phosphate + H(+). The catalysed reaction is L-aspartyl-tRNA(Asn) + L-glutamine + ATP + H2O = L-asparaginyl-tRNA(Asn) + L-glutamate + ADP + phosphate + 2 H(+). In terms of biological role, allows the formation of correctly charged Asn-tRNA(Asn) or Gln-tRNA(Gln) through the transamidation of misacylated Asp-tRNA(Asn) or Glu-tRNA(Gln) in organisms which lack either or both of asparaginyl-tRNA or glutaminyl-tRNA synthetases. The reaction takes place in the presence of glutamine and ATP through an activated phospho-Asp-tRNA(Asn) or phospho-Glu-tRNA(Gln). The chain is Aspartyl/glutamyl-tRNA(Asn/Gln) amidotransferase subunit B from Chlorobium chlorochromatii (strain CaD3).